A 216-amino-acid polypeptide reads, in one-letter code: MPLSEAAVKVQAALQERGLETPMLPSVFTPEERKDKIEHHMKEILTLMSLDLSDDSLADTPRRIAKMYVDEIFSGLDYANFPKITVIDNKMGFDEMVRVQDISLTSTCEHHLVTIDGTATIAYLPRKKIIGLSKINRIVRFFAQRPQVQERLTQQVLVALQTLLETKDVAVKMDAVHYCVKSRGVMDSTSSTTTTALGGIFKSNPATRAEFLHQSK.

Cysteine 108, histidine 111, and cysteine 179 together coordinate Zn(2+).

This sequence belongs to the GTP cyclohydrolase I family. Toroid-shaped homodecamer, composed of two pentamers of five dimers.

The enzyme catalyses GTP + H2O = 7,8-dihydroneopterin 3'-triphosphate + formate + H(+). It participates in cofactor biosynthesis; 7,8-dihydroneopterin triphosphate biosynthesis; 7,8-dihydroneopterin triphosphate from GTP: step 1/1. This is GTP cyclohydrolase 1 from Shewanella oneidensis (strain ATCC 700550 / JCM 31522 / CIP 106686 / LMG 19005 / NCIMB 14063 / MR-1).